A 707-amino-acid polypeptide reads, in one-letter code: MPEYIKRKFGDQTIVFETGKLAKFADGSVTVSYGETAVLVTAVSVTELKEDQDFLPLQVEYREKAAAAGRFPGGYFRKEGRPTDKEILTSRMIDRPLRPLFPKGYFYETQILGTLLSADGQNDPDVMAINGASAALMVSDIPFYGPVGAVRIGQIDGRWIINPTHREREISDIDLVYVGSEHYPLMIEGSAREFPEEEFVKALEFAHQHVQEVIAAQKELAEKVGKPKRSCVLFEENLAITNRLAELYSSQLQDALYTSSKTERQKKLAKLKEELTAKILEEFPTATPREITSSYDSLQKTIFRTNVLETKRRCDGRGPEDIRPIAIETSVVPRSHGSSLFCRGETQALCMATLASLNEAQELDAYGGGEQSKRFLLHYFFPPFSVGEVGRITGQSRREIGHGALAERSLLPVIPSETDFPYAIRVSSEILESNGSTSMATVCGGSLALMDAGVPLKTSVAGISVGLVKGKEEDFDWSRYCLLTDILGLEDHYGDMDFKIAGTRKGITGFQLDLKLRGIPLDVMAKAIFQSQKARMVILDCMDKVINAPRAEISKHAPRIEKIKIHPDKIGLLIGPGGKTIKKISAESGAEITIEDDGTVMIYSSSADSLEAAREMIEDMVGEVTVGGIYRSKVVSVKDFGCFIEIKGKGEGLVHISELSDTPVRRVDQVVRVGEEIWVKCIGVDEKGRYKFSRKAAMKELHAKRMQ.

Aspartate 491 and aspartate 497 together coordinate Mg(2+). In terms of domain architecture, KH spans 558–617; that stretch reads PRIEKIKIHPDKIGLLIGPGGKTIKKISAESGAEITIEDDGTVMIYSSSADSLEAAREMI. The S1 motif domain occupies 622–695; it reads GEVTVGGIYR…EKGRYKFSRK (74 aa).

It belongs to the polyribonucleotide nucleotidyltransferase family. It depends on Mg(2+) as a cofactor.

The protein resides in the cytoplasm. The enzyme catalyses RNA(n+1) + phosphate = RNA(n) + a ribonucleoside 5'-diphosphate. In terms of biological role, involved in mRNA degradation. Catalyzes the phosphorolysis of single-stranded polyribonucleotides processively in the 3'- to 5'-direction. This Methylacidiphilum infernorum (isolate V4) (Methylokorus infernorum (strain V4)) protein is Polyribonucleotide nucleotidyltransferase.